A 477-amino-acid chain; its full sequence is PTS system MurNAc-GlcNAc-specific EIIBC component (477 aa).

Positions 5–87 constitute a PTS EIIB type-1 domain; that stretch reads QQLAHHILDA…VKLSGVQLGE (83 aa). Cys27 serves as the catalytic Phosphocysteine intermediate; for EIIB activity. Residues 91-113 are disordered; that stretch reads HRSNTSNIKNQAQQNKREFQQKR. A compositionally biased stretch (polar residues) spans 92–104; sequence RSNTSNIKNQAQQ. The 355-residue stretch at 123-477 folds into the PTS EIIC type-1 domain; it reads KSIANIFIPL…EMRNLNKLGD (355 aa). 10 helical membrane passes run 128 to 148, 167 to 187, 192 to 212, 227 to 247, 267 to 287, 298 to 318, 342 to 362, 377 to 397, 401 to 421, and 443 to 463; these read IFIPLIPAFIGAGLIGGIAAV, VAVLNVIKDGMLAYLAIFTGF, VFGATPGLGGVIGGTTLLTGI, LIAGQGGIIGVILAVWLLSII, ISLLIIGLLTIFFFMPIAGFI, VIGVGGIFSGFIIGAFFLPLV, LLPIAAMAGAGQVGAALALWV, ALPVGFLGIGEPLIYGVTLPL, FITACLGGGIGGAVIGGIGHI, and LGYIIGLLSAYLAGFIFTYFF.

The protein localises to the cell membrane. The catalysed reaction is N-acetyl-beta-D-muramate-(1-&gt;4)-N-acetyl-D-glucosamine(out) + N(pros)-phospho-L-histidyl-[protein] = 6-phospho-N-acetyl-beta-D-muramate-(1-&gt;4)-N-acetyl-D-glucosamine(in) + L-histidyl-[protein]. It functions in the pathway cell wall biogenesis; peptidoglycan recycling. In terms of biological role, the phosphoenolpyruvate-dependent sugar phosphotransferase system (sugar PTS), a major carbohydrate active transport system, catalyzes the phosphorylation of incoming sugar substrates concomitantly with their translocation across the cell membrane. This system is involved in the uptake and phosphorylation of MurNAc-GlcNAc, the principle peptidoglycan turnover product of S.aureus, yielding cytoplasmic MurNAc 6P-GlcNAc. This chain is PTS system MurNAc-GlcNAc-specific EIIBC component, found in Staphylococcus haemolyticus (strain JCSC1435).